We begin with the raw amino-acid sequence, 37 residues long: Large ribosomal subunit protein bL36c (37 aa).

It belongs to the bacterial ribosomal protein bL36 family.

It is found in the plastid. The protein resides in the chloroplast. The chain is Large ribosomal subunit protein bL36c from Lolium perenne (Perennial ryegrass).